The following is a 136-amino-acid chain: Probable S-adenosyl-L-methionine-binding protein PH1056 (136 aa).

A TsaA-like domain is found at 8–126 (IVPVGYIRKE…FPERYDCPKE (119 aa)). S-adenosyl-L-methionine is bound by residues 48–49 (HK), Arg78, and 106–109 (EDGT).

The protein belongs to the tRNA methyltransferase O family.

In Pyrococcus horikoshii (strain ATCC 700860 / DSM 12428 / JCM 9974 / NBRC 100139 / OT-3), this protein is Probable S-adenosyl-L-methionine-binding protein PH1056.